A 222-amino-acid chain; its full sequence is Protein-L-isoaspartate O-methyltransferase (222 aa).

Serine 69 is a catalytic residue.

This sequence belongs to the methyltransferase superfamily. L-isoaspartyl/D-aspartyl protein methyltransferase family.

The protein localises to the cytoplasm. The enzyme catalyses [protein]-L-isoaspartate + S-adenosyl-L-methionine = [protein]-L-isoaspartate alpha-methyl ester + S-adenosyl-L-homocysteine. Its function is as follows. Catalyzes the methyl esterification of L-isoaspartyl residues in peptides and proteins that result from spontaneous decomposition of normal L-aspartyl and L-asparaginyl residues. It plays a role in the repair and/or degradation of damaged proteins. The chain is Protein-L-isoaspartate O-methyltransferase from Caulobacter vibrioides (strain NA1000 / CB15N) (Caulobacter crescentus).